A 229-amino-acid polypeptide reads, in one-letter code: Uracil-DNA glycosylase (229 aa).

The Proton acceptor role is filled by Asp64.

This sequence belongs to the uracil-DNA glycosylase (UDG) superfamily. UNG family.

It is found in the cytoplasm. The enzyme catalyses Hydrolyzes single-stranded DNA or mismatched double-stranded DNA and polynucleotides, releasing free uracil.. Functionally, excises uracil residues from the DNA which can arise as a result of misincorporation of dUMP residues by DNA polymerase or due to deamination of cytosine. This chain is Uracil-DNA glycosylase, found in Salmonella choleraesuis (strain SC-B67).